A 126-amino-acid polypeptide reads, in one-letter code: MRPEYRNKKIEAYIRELIAQAIQKIKEPEFEYLKDYIVISRVLISKDRRFADVFVSVIGNSEQRKKAVELLEKYKGYFRTFVAKNVRLYTAPELRFKEDKGIEESVRINKLLDEIMSKEDENGSDN.

Belongs to the RbfA family. As to quaternary structure, monomer. Binds 30S ribosomal subunits, but not 50S ribosomal subunits or 70S ribosomes.

Its subcellular location is the cytoplasm. Functionally, one of several proteins that assist in the late maturation steps of the functional core of the 30S ribosomal subunit. Associates with free 30S ribosomal subunits (but not with 30S subunits that are part of 70S ribosomes or polysomes). Required for efficient processing of 16S rRNA. May interact with the 5'-terminal helix region of 16S rRNA. The chain is Ribosome-binding factor A from Thermosipho africanus (strain TCF52B).